The sequence spans 62 residues: Large ribosomal subunit protein uL29 (62 aa).

This sequence belongs to the universal ribosomal protein uL29 family.

This is Large ribosomal subunit protein uL29 from Cytophaga hutchinsonii (strain ATCC 33406 / DSM 1761 / CIP 103989 / NBRC 15051 / NCIMB 9469 / D465).